The sequence spans 240 residues: 2,3,4,5-tetrahydropyridine-2,6-dicarboxylate N-acetyltransferase (240 aa).

This sequence belongs to the transferase hexapeptide repeat family. DapH subfamily.

The enzyme catalyses (S)-2,3,4,5-tetrahydrodipicolinate + acetyl-CoA + H2O = L-2-acetamido-6-oxoheptanedioate + CoA. Its pathway is amino-acid biosynthesis; L-lysine biosynthesis via DAP pathway; LL-2,6-diaminopimelate from (S)-tetrahydrodipicolinate (acetylase route): step 1/3. Catalyzes the transfer of an acetyl group from acetyl-CoA to tetrahydrodipicolinate. This chain is 2,3,4,5-tetrahydropyridine-2,6-dicarboxylate N-acetyltransferase, found in Bacillus cytotoxicus (strain DSM 22905 / CIP 110041 / 391-98 / NVH 391-98).